Here is a 370-residue protein sequence, read N- to C-terminus: tRNA pseudouridine(27/28) synthase (370 aa).

The active-site Nucleophile is D56. Y111 provides a ligand contact to substrate.

The protein belongs to the tRNA pseudouridine synthase TruA family.

It localises to the mitochondrion. The catalysed reaction is uridine(27/28) in mitochondrial tRNA = pseudouridine(27/28) in mitochondrial tRNA. In terms of biological role, mitochondrial-specific pseudouridine synthase catalyzing the formation of pseudouridine at positions 27 and 28 in the anticodon stem and loop of mitochondrial transfer RNAs. This is tRNA pseudouridine(27/28) synthase (PUS2) from Saccharomyces cerevisiae (strain ATCC 204508 / S288c) (Baker's yeast).